Reading from the N-terminus, the 278-residue chain is Pantothenate synthetase (278 aa).

27 to 34 (MGYLHEGH) provides a ligand contact to ATP. The active-site Proton donor is the His34. Gln58 serves as a coordination point for (R)-pantoate. Gln58 serves as a coordination point for beta-alanine. An ATP-binding site is contributed by 144–147 (GQKD). Gln150 contributes to the (R)-pantoate binding site. Residues Val173 and 181–184 (MSSR) each bind ATP.

Belongs to the pantothenate synthetase family. In terms of assembly, homodimer.

It localises to the cytoplasm. It carries out the reaction (R)-pantoate + beta-alanine + ATP = (R)-pantothenate + AMP + diphosphate + H(+). Its pathway is cofactor biosynthesis; (R)-pantothenate biosynthesis; (R)-pantothenate from (R)-pantoate and beta-alanine: step 1/1. In terms of biological role, catalyzes the condensation of pantoate with beta-alanine in an ATP-dependent reaction via a pantoyl-adenylate intermediate. The chain is Pantothenate synthetase from Roseiflexus castenholzii (strain DSM 13941 / HLO8).